A 367-amino-acid chain; its full sequence is Histidinol-phosphate aminotransferase (367 aa).

Lys222 carries the N6-(pyridoxal phosphate)lysine modification.

It belongs to the class-II pyridoxal-phosphate-dependent aminotransferase family. Histidinol-phosphate aminotransferase subfamily. The cofactor is pyridoxal 5'-phosphate.

It catalyses the reaction L-histidinol phosphate + 2-oxoglutarate = 3-(imidazol-4-yl)-2-oxopropyl phosphate + L-glutamate. It functions in the pathway amino-acid biosynthesis; L-histidine biosynthesis; L-histidine from 5-phospho-alpha-D-ribose 1-diphosphate: step 7/9. The chain is Histidinol-phosphate aminotransferase from Methanosphaera stadtmanae (strain ATCC 43021 / DSM 3091 / JCM 11832 / MCB-3).